The following is a 275-amino-acid chain: Thioredoxin-like 1-1, chloroplastic (275 aa).

The transit peptide at 1 to 72 (MTEVISKTSL…GDSQDESFRR (72 aa)) directs the protein to the chloroplast. A Thioredoxin domain is found at 73 to 206 (SSAITAQTTL…FRDALAKHGP (134 aa)). Active-site nucleophile residues include Cys-129 and Cys-132. Cys-129 and Cys-132 are disulfide-bonded. A disordered region spans residues 238–275 (KPVPVEKEAATPDSNPSLPVPLPSMSSNDEKTLVSAGR). The span at 249-264 (PDSNPSLPVPLPSMSS) shows a compositional bias: low complexity.

This sequence belongs to the thioredoxin family.

The protein resides in the plastid. It localises to the chloroplast. In terms of biological role, thiol-disulfide oxidoreductase that may participate in various redox reactions. Possesses insulin disulfide bonds reducing activity. The sequence is that of Thioredoxin-like 1-1, chloroplastic from Arabidopsis thaliana (Mouse-ear cress).